Reading from the N-terminus, the 291-residue chain is uncharacterized protein (291 aa).

Residues 1–82 (MEAEKETEQE…SYSSSPFETH (82 aa)) are disordered. Low complexity-rich tracts occupy residues 28–43 (HSHSMSSPIHSSISAS) and 59–78 (STSSSSSSSSSPLTSYSSSP).

This is an uncharacterized protein from Arabidopsis thaliana (Mouse-ear cress).